The chain runs to 130 residues: Small ribosomal subunit protein uS8 (130 aa).

It belongs to the universal ribosomal protein uS8 family. In terms of assembly, part of the 30S ribosomal subunit.

Its function is as follows. One of the primary rRNA binding proteins, it binds directly to 16S rRNA central domain where it helps coordinate assembly of the platform of the 30S subunit. This Pyrococcus horikoshii (strain ATCC 700860 / DSM 12428 / JCM 9974 / NBRC 100139 / OT-3) protein is Small ribosomal subunit protein uS8.